The following is a 398-amino-acid chain: Dihydroorotase (398 aa).

Zn(2+)-binding residues include H58 and H60. Residues 60–62 (HFR) and N92 contribute to the substrate site. Zn(2+)-binding residues include D151, H178, and H215. A substrate-binding site is contributed by N256. A Zn(2+)-binding site is contributed by D283. D283 is an active-site residue. Substrate-binding positions include H287 and 297–298 (PG).

This sequence belongs to the metallo-dependent hydrolases superfamily. DHOase family. Class I DHOase subfamily. It depends on Zn(2+) as a cofactor.

The enzyme catalyses (S)-dihydroorotate + H2O = N-carbamoyl-L-aspartate + H(+). The protein operates within pyrimidine metabolism; UMP biosynthesis via de novo pathway; (S)-dihydroorotate from bicarbonate: step 3/3. Catalyzes the reversible cyclization of carbamoyl aspartate to dihydroorotate. The chain is Dihydroorotase from Clostridium botulinum (strain Eklund 17B / Type B).